A 176-amino-acid polypeptide reads, in one-letter code: HTH-type transcriptional regulator DctR (176 aa).

In terms of domain architecture, HTH luxR-type spans 109–174 (VPEADVSLSR…ELVRHQHINY (66 aa)). Positions 133–152 (TEDILEKLKISLKTFYCHKH) form a DNA-binding region, H-T-H motif.

May act as a transcriptional regulator of dctA. The polypeptide is HTH-type transcriptional regulator DctR (dctR) (Escherichia coli O6:H1 (strain CFT073 / ATCC 700928 / UPEC)).